A 401-amino-acid chain; its full sequence is Large ribosomal subunit protein uL4B (401 aa).

A compositionally biased stretch (basic and acidic residues) spans Ile-351–Thr-373. The interval Ile-351–Lys-401 is disordered. The span at Lys-374–Gln-385 shows a compositional bias: basic residues. Residues Ala-386–Lys-401 are compositionally biased toward basic and acidic residues.

The protein belongs to the universal ribosomal protein uL4 family. Component of the large ribosomal subunit.

Its subcellular location is the cytoplasm. In terms of biological role, component of the large ribosomal subunit. The ribosome is a large ribonucleoprotein complex responsible for the synthesis of proteins in the cell. The chain is Large ribosomal subunit protein uL4B (rpl4-b) from Xenopus laevis (African clawed frog).